Reading from the N-terminus, the 234-residue chain is Thiamine import ATP-binding protein ThiQ (234 aa).

Residues 2–230 (LVLDDVQYTY…HPSKTLQAFV (229 aa)) form the ABC transporter domain. Position 32 to 39 (32 to 39 (GPSGAGKS)) interacts with ATP.

The protein belongs to the ABC transporter superfamily. Thiamine importer (TC 3.A.1.19.1) family. The complex is composed of two ATP-binding proteins (ThiQ), two transmembrane proteins (ThiP) and a solute-binding protein (ThiB).

The protein localises to the cell inner membrane. It carries out the reaction thiamine(out) + ATP + H2O = thiamine(in) + ADP + phosphate + H(+). Its function is as follows. Part of the ABC transporter complex ThiBPQ involved in thiamine import. Responsible for energy coupling to the transport system. The chain is Thiamine import ATP-binding protein ThiQ from Vibrio parahaemolyticus serotype O3:K6 (strain RIMD 2210633).